Here is a 634-residue protein sequence, read N- to C-terminus: AAl-toxin cluster-specific transcription factor ALT13 (634 aa).

Positions 30–56 (CENCKRRKVRCSGANPCEQCLKVNVHC) form a DNA-binding region, zn(2)-C6 fungal-type. The segment at 66–89 (RRSVPNSGADKNNQQGDTDRHNGA) is disordered. The segment covering 69–81 (VPNSGADKNNQQG) has biased composition (polar residues).

Its subcellular location is the nucleus. In terms of biological role, transcription factor that regulates the expression of the gene cluster that mediates the biosynthesis of AAL-toxins, sphinganine-analog mycotoxins responsible for Alternaria stem canker on tomato by the tomato pathotype. This is AAl-toxin cluster-specific transcription factor ALT13 from Alternaria alternata (Alternaria rot fungus).